Reading from the N-terminus, the 345-residue chain is Anthranilate phosphoribosyltransferase 1 (345 aa).

Residues Gly-86, 89-90, Thr-94, 96-99, 114-122, and Ser-126 each bind 5-phospho-alpha-D-ribose 1-diphosphate; these read GD, NIST, and KHGGRGVSS. Gly-86 provides a ligand contact to anthranilate. Ser-98 lines the Mg(2+) pocket. An anthranilate-binding site is contributed by Arg-172. Asp-231 and Glu-232 together coordinate Mg(2+).

This sequence belongs to the anthranilate phosphoribosyltransferase family. As to quaternary structure, homodimer. The cofactor is Mg(2+).

The catalysed reaction is N-(5-phospho-beta-D-ribosyl)anthranilate + diphosphate = 5-phospho-alpha-D-ribose 1-diphosphate + anthranilate. Its pathway is amino-acid biosynthesis; L-tryptophan biosynthesis; L-tryptophan from chorismate: step 2/5. Its function is as follows. Catalyzes the transfer of the phosphoribosyl group of 5-phosphorylribose-1-pyrophosphate (PRPP) to anthranilate to yield N-(5'-phosphoribosyl)-anthranilate (PRA). This Ralstonia nicotianae (strain ATCC BAA-1114 / GMI1000) (Ralstonia solanacearum) protein is Anthranilate phosphoribosyltransferase 1.